Here is a 542-residue protein sequence, read N- to C-terminus: Dihydropyrimidinase (542 aa).

Residues histidine 62, histidine 64, and lysine 167 each contribute to the Zn(2+) site. The residue at position 167 (lysine 167) is an N6-carboxylysine. A substrate-binding site is contributed by tyrosine 172. Positions 199 and 255 each coordinate Zn(2+). Serine 331 contributes to the substrate binding site. Aspartate 358 is a Zn(2+) binding site. Asparagine 392 lines the substrate pocket.

This sequence belongs to the metallo-dependent hydrolases superfamily. Hydantoinase/dihydropyrimidinase family. In terms of assembly, homotetramer. Zn(2+) serves as cofactor. Carboxylation allows a single lysine to coordinate two zinc ions.

The enzyme catalyses 5,6-dihydrouracil + H2O = 3-(carbamoylamino)propanoate + H(+). Its function is as follows. Catalyzes the second step of the reductive pyrimidine degradation, the reversible hydrolytic ring opening of dihydropyrimidines. Can catalyze the ring opening of 5,6-dihydrouracil to N-carbamyl-alanine and of 5,6-dihydrothymine to N-carbamyl-amino isobutyrate. This chain is Dihydropyrimidinase (PYD2), found in Lachancea kluyveri (strain ATCC 58438 / CBS 3082 / BCRC 21498 / NBRC 1685 / JCM 7257 / NCYC 543 / NRRL Y-12651) (Yeast).